A 417-amino-acid chain; its full sequence is Serine hydroxymethyltransferase (417 aa).

(6S)-5,6,7,8-tetrahydrofolate contacts are provided by residues Leu-121 and 125–127 (GHL). Lys-229 is subject to N6-(pyridoxal phosphate)lysine. 355 to 357 (SPF) serves as a coordination point for (6S)-5,6,7,8-tetrahydrofolate.

It belongs to the SHMT family. Homodimer. Requires pyridoxal 5'-phosphate as cofactor.

The protein resides in the cytoplasm. It carries out the reaction (6R)-5,10-methylene-5,6,7,8-tetrahydrofolate + glycine + H2O = (6S)-5,6,7,8-tetrahydrofolate + L-serine. The protein operates within one-carbon metabolism; tetrahydrofolate interconversion. It functions in the pathway amino-acid biosynthesis; glycine biosynthesis; glycine from L-serine: step 1/1. Functionally, catalyzes the reversible interconversion of serine and glycine with tetrahydrofolate (THF) serving as the one-carbon carrier. This reaction serves as the major source of one-carbon groups required for the biosynthesis of purines, thymidylate, methionine, and other important biomolecules. Also exhibits THF-independent aldolase activity toward beta-hydroxyamino acids, producing glycine and aldehydes, via a retro-aldol mechanism. This Buchnera aphidicola subsp. Schizaphis graminum (strain Sg) protein is Serine hydroxymethyltransferase.